We begin with the raw amino-acid sequence, 337 residues long: Deoxyhypusine hydroxylase (337 aa).

HEAT-like PBS-type repeat units lie at residues 73 to 99 (LKHE…VLSD) and 106 to 132 (CRHE…YRDR). Fe cation contacts are provided by histidine 75, glutamate 76, histidine 108, and glutamate 109. Basic and acidic residues predominate over residues 156–165 (AERQKEKLRP). Residues 156–183 (AERQKEKLRPSDFASIDPAPPMPESDKE) form a disordered region. 3 HEAT-like PBS-type repeats span residues 202–235 (SRYR…GLSD), 240–266 (FRHE…ALSN), and 273–300 (VRHE…FLHD). Fe cation is bound by residues histidine 242, glutamate 243, histidine 275, and glutamate 276.

It belongs to the deoxyhypusine hydroxylase family. The cofactor is Fe(2+).

The protein resides in the cytoplasm. The protein localises to the nucleus. The catalysed reaction is [eIF5A protein]-deoxyhypusine + AH2 + O2 = [eIF5A protein]-hypusine + A + H2O. It participates in protein modification; eIF5A hypusination. Its function is as follows. Catalyzes the hydroxylation of the N(6)-(4-aminobutyl)-L-lysine intermediate to form hypusine, an essential post-translational modification only found in mature eIF-5A factor. This is Deoxyhypusine hydroxylase from Gibberella zeae (strain ATCC MYA-4620 / CBS 123657 / FGSC 9075 / NRRL 31084 / PH-1) (Wheat head blight fungus).